The chain runs to 37 residues: Large ribosomal subunit protein bL36c (37 aa).

It belongs to the bacterial ribosomal protein bL36 family.

It is found in the plastid. The protein resides in the chloroplast. The protein is Large ribosomal subunit protein bL36c of Phaeodactylum tricornutum (strain CCAP 1055/1).